Reading from the N-terminus, the 402-residue chain is Multidrug resistance protein MdtH (402 aa).

At 1–12 (MSRVSQARNLGK) the chain is on the cytoplasmic side. A helical membrane pass occupies residues 13-33 (YFLLIDNMLVVLGFFVVFPLI). Residues 34–98 (SIRFVDQMGW…GFATMGIAHE (65 aa)) are Periplasmic-facing. Residues 99 to 116 (PWLLWFSCLLSGLGGTLF) traverse the membrane as a helical segment. The Cytoplasmic segment spans residues 117-138 (DPPRSALVVKLIRPQQRGRFFS). Residues 139–159 (LLMMQDSAGAVIGALLGSWLL) form a helical membrane-spanning segment. At 160–164 (QYDFR) the chain is on the periplasmic side. Residues 165-185 (LVCATGAVLFVLCAAFNAWLL) form a helical membrane-spanning segment. Residues 186–213 (PAWKLSTVRTPVREGMTRVMRDKRFVTY) lie on the Cytoplasmic side of the membrane. Residues 214-234 (VLTLAGYYMLAVQVMLMLPIM) form a helical membrane-spanning segment. The Periplasmic segment spans residues 235–243 (VNDVAGAPS). A helical transmembrane segment spans residues 244-264 (AVKWMYAIEACLSLTLLYPIA). At 265-276 (RWSEKHFRLEHR) the chain is on the cytoplasmic side. A helical membrane pass occupies residues 277-297 (LMAGLLIMSLSMMPVGMVSGL). The Periplasmic portion of the chain corresponds to 298–299 (QQ). Residues 300-320 (LFNLICLFYIGSIIAEPARET) form a helical membrane-spanning segment. The Cytoplasmic segment spans residues 321–339 (LSASLADARARGSYMGFSR). Residues 340 to 360 (LGLAIGGAIGYIGGGWLFDLG) traverse the membrane as a helical segment. The Periplasmic segment spans residues 361-367 (KSAHQPE). The helical transmembrane segment at 368–388 (LPWMMLGIIGIFTFLALGWQF) threads the bilayer. The Cytoplasmic portion of the chain corresponds to 389–402 (SQKRAARRLLERDA).

Belongs to the major facilitator superfamily. DHA1 family. MdtH (TC 2.A.1.2.21) subfamily.

Its subcellular location is the cell inner membrane. In terms of biological role, confers resistance to norfloxacin and enoxacin. The protein is Multidrug resistance protein MdtH of Escherichia coli O9:H4 (strain HS).